The sequence spans 455 residues: Carbamoyl phosphate synthase arginine-specific small chain (455 aa).

Residues 1 to 28 constitute a mitochondrion transit peptide; that stretch reads MFARFCKAIPAKGRAFPSVNASIQSRLM. One can recognise a Glutamine amidotransferase type-1 domain in the interval 219-406; that stretch reads HVAVIDCGVK…IDSVRKYKAN (188 aa). Cys-295 acts as the Nucleophile in catalysis. Residues His-379 and Glu-381 contribute to the active site.

Belongs to the CarA family. Heterodimer composed of 2 chains; the small (or glutamine) chain promotes the hydrolysis of glutamine to ammonia, which is used by the large (or ammonia) chain to synthesize carbamoyl phosphate.

Its subcellular location is the mitochondrion matrix. It catalyses the reaction hydrogencarbonate + L-glutamine + 2 ATP + H2O = carbamoyl phosphate + L-glutamate + 2 ADP + phosphate + 2 H(+). The enzyme catalyses L-glutamine + H2O = L-glutamate + NH4(+). It participates in amino-acid biosynthesis; L-arginine biosynthesis; carbamoyl phosphate from bicarbonate: step 1/1. Functionally, small subunit of the arginine-specific carbamoyl phosphate synthase (CPSase). CPSase catalyzes the formation of carbamoyl phosphate from the ammonia moiety of glutamine, carbonate, and phosphate donated by ATP, the first step of the arginine biosynthetic pathway. The small subunit (glutamine amidotransferase) binds and cleaves glutamine to supply the large subunit with the substrate ammonia. The sequence is that of Carbamoyl phosphate synthase arginine-specific small chain (cpa1) from Aspergillus clavatus (strain ATCC 1007 / CBS 513.65 / DSM 816 / NCTC 3887 / NRRL 1 / QM 1276 / 107).